The sequence spans 216 residues: Orotate phosphoribosyltransferase (216 aa).

K30 contacts 5-phospho-alpha-D-ribose 1-diphosphate. Position 38–39 (38–39 (FF)) interacts with orotate. 5-phospho-alpha-D-ribose 1-diphosphate-binding positions include 75–76 (YK), R102, K103, K106, H108, and 128–136 (DDVITAGTA). Orotate is bound by residues T132 and R160.

Belongs to the purine/pyrimidine phosphoribosyltransferase family. PyrE subfamily. Homodimer. Mg(2+) is required as a cofactor.

The catalysed reaction is orotidine 5'-phosphate + diphosphate = orotate + 5-phospho-alpha-D-ribose 1-diphosphate. Its pathway is pyrimidine metabolism; UMP biosynthesis via de novo pathway; UMP from orotate: step 1/2. In terms of biological role, catalyzes the transfer of a ribosyl phosphate group from 5-phosphoribose 1-diphosphate to orotate, leading to the formation of orotidine monophosphate (OMP). This chain is Orotate phosphoribosyltransferase, found in Acinetobacter baylyi (strain ATCC 33305 / BD413 / ADP1).